The sequence spans 754 residues: Neprilysin-1 (754 aa).

The helical; Signal-anchor for type II membrane protein transmembrane segment at 5 to 27 (FGPPIVFLISCYALILCGTVDAL) threads the bilayer. 7 N-linked (GlcNAc...) asparagine glycosylation sites follow: N38, N81, N132, N217, N273, N303, and N441. The 692-residue stretch at 63–754 (VGDSEGYQEA…MNPTKRCVVW (692 aa)) folds into the Peptidase M13 domain. Intrachain disulfides connect C87–C739, C95–C699, C151–C414, and C624–C751. Residue H587 coordinates Zn(2+). E588 is a catalytic residue. H591 is a Zn(2+) binding site. N-linked (GlcNAc...) asparagine glycosylation occurs at N612. E649 contributes to the Zn(2+) binding site. The active-site Proton donor is the D653.

This sequence belongs to the peptidase M13 family. Zn(2+) is required as a cofactor. In terms of tissue distribution, specifically expressed in pharyngeal cells and a single head neuron.

Its subcellular location is the membrane. Functionally, probable cell surface protease. Required to control the neuronal innervation of pharyngeal pumping. The sequence is that of Neprilysin-1 (nep-1) from Caenorhabditis elegans.